The sequence spans 240 residues: MKLLIWGLSGTMGNLISVAAQKDSHWSNIAGVDAKNPTSNLKHTPEVIIDFSHPSALEGVLDYAMAHGVPLVIGTTGFEKEHLEAIDQAAKHIPVLQATNMSLGMNILFSLVEQVAGMLKNKADIEVIESHHNRKMDAPSGSAVTIVECIEKGLGEARKHQHGREGQCPREKGEIGVHAIRGGNIVGFHEANFINELETVKVSHEAHDRSVFAQGALEAAKFVVNQPTGLYHMKDVLGLT.

7–12 (GLSGTM) contacts NAD(+). Residue K35 coordinates NADP(+). Residues 74-76 (GTT) and 98-101 (ATNM) contribute to the NAD(+) site. Catalysis depends on H131, which acts as the Proton donor/acceptor. H132 contacts (S)-2,3,4,5-tetrahydrodipicolinate. The active-site Proton donor is K135. Residue 141–142 (GS) participates in (S)-2,3,4,5-tetrahydrodipicolinate binding.

The protein belongs to the DapB family.

The protein resides in the cytoplasm. The catalysed reaction is (S)-2,3,4,5-tetrahydrodipicolinate + NAD(+) + H2O = (2S,4S)-4-hydroxy-2,3,4,5-tetrahydrodipicolinate + NADH + H(+). It catalyses the reaction (S)-2,3,4,5-tetrahydrodipicolinate + NADP(+) + H2O = (2S,4S)-4-hydroxy-2,3,4,5-tetrahydrodipicolinate + NADPH + H(+). It participates in amino-acid biosynthesis; L-lysine biosynthesis via DAP pathway; (S)-tetrahydrodipicolinate from L-aspartate: step 4/4. Its function is as follows. Catalyzes the conversion of 4-hydroxy-tetrahydrodipicolinate (HTPA) to tetrahydrodipicolinate. The chain is 4-hydroxy-tetrahydrodipicolinate reductase from Alkaliphilus metalliredigens (strain QYMF).